We begin with the raw amino-acid sequence, 341 residues long: Trimethylamine N-oxide transport system ATP-binding protein TmoW (341 aa).

Residues 6–265 enclose the ABC transporter domain; the sequence is IKCESVYKIF…PATEYVRKFT (260 aa). 61–68 lines the ATP pocket; it reads GLSGSGKS.

Belongs to the ABC transporter superfamily. In terms of assembly, the complex is probably composed of two ATP-binding proteins (TmoW), two transmembrane proteins (TmoV) and a solute-binding protein (TmoX).

It localises to the cell inner membrane. The catalysed reaction is a quaternary ammonium(out) + ATP + H2O = a quaternary ammonium(in) + ADP + phosphate + H(+). Its function is as follows. Part of the ABC transporter complex TmoXWV involved in trimethylamine N-oxide (TMAO) import. Responsible for energy coupling to the transport system. This chain is Trimethylamine N-oxide transport system ATP-binding protein TmoW, found in Pelagibacter ubique (strain HTCC1062).